Reading from the N-terminus, the 266-residue chain is Derlin-1 (266 aa).

The Cytoplasmic segment spans residues 1–20 (MSSPGEFYNSLPPITKAYGT). A helical membrane pass occupies residues 21–41 (LCFFTTVATQLGLVAPVHIAL). The Lumenal segment spans residues 42–55 (IPELVLKQFQIWRL). A helical membrane pass occupies residues 56–76 (ITNLFFLGGFSINFGIRLLMI). The Cytoplasmic portion of the chain corresponds to 77 to 94 (ARYGVQLEKGPFERRTAD). Residues 95 to 115 (FLWMMIFGSFTLLVLSVIPFF) form a helical membrane-spanning segment. The Lumenal segment spans residues 116 to 156 (WTPFLGVSLVFMLLYLWSREFPNANISLYGLVTLKAFYLPW). Residues 157-177 (AMLALDVIFGSPIMPDLLGII) traverse the membrane as a helical segment. The Cytoplasmic portion of the chain corresponds to 178-266 (AGHLYYFLTV…FRGRSYRLTD (89 aa)). The disordered stretch occupies residues 235-266 (GGVGGGGAYSSARAPPESSNTAFRGRSYRLTD).

The protein belongs to the derlin family.

The protein localises to the endoplasmic reticulum membrane. Functionally, may be involved in the degradation process of specific misfolded endoplasmic reticulum (ER) luminal proteins. The protein is Derlin-1 (DER1) of Arabidopsis thaliana (Mouse-ear cress).